Here is a 1024-residue protein sequence, read N- to C-terminus: Non-canonical nonribosomal peptide synthetase FrzA (1024 aa).

Residues 29-425 form an adenylation (A) domain region; that stretch reads RAQKSHQAIA…GRRDHQVKVR (397 aa). Residues 534–611 form the Carrier domain; the sequence is NASQDVRSAL…ALTSIIKQRL (78 aa). Serine 571 carries the O-(pantetheine 4'-phosphoryl)serine modification. Residues 655–898 enclose the Thioester reductase (TE) domain; sequence LTGGTGFVGA…VPVDYVNAAI (244 aa).

It belongs to the NRP synthetase family. Requires pantetheine 4'-phosphate as cofactor.

It catalyses the reaction L-tyrosinal + AMP + diphosphate + NADP(+) = L-tyrosine + ATP + NADPH + H(+). The protein operates within secondary metabolite biosynthesis. In terms of biological role, non-canonical nonribosomal peptide synthetase; part of the gene cluster that mediates the biosynthesis of the alkaloid (-)-FR901483, a potent immunosuppressant that shows efficacy in animal models and a probable inhibitor of purine nucleotide biosynthesis by targeting phosphoribosylpyrophosphate amidotransferase (PPAT). Within the pathway, FrzA catalyzes the reduction of L-tyrosine via its C-terminal reductase domain to produce L-tyrosinal. The biosynthesis of (-)-FR901483 starts with the condensation of two L-tyrosines to yield (S,S)-dityrosyl-piperazine. This process occurs in 3 steps with the non-canonical nonribosomal peptide synthetase FrzA catalyzing the reduction of L-tyrosine into L-tyrosinal, the spontaneous condensation of 2 L-tyrosinal units, and the subsequent reduction by the NmrA-like family domain-containing oxidoreductase FrzB. The cytochrome P450 monooxygenase FrzC then performs coupling between N10 and C1' to morph the piperazine into a 1,4-diazabicyclo[3.2.1]octane spiro-fused to a 2,5-cyclohexadienone. The dienone portion is further reduced to cyclohexanone by the flavin-dependent reductase FrzD. The methyltranserases (MTs) FrzE and FrzF are then involved in the methylation at the C10' amine and the C4 phenolic oxygen, respectively. The order of the two MTs appear to be interchangeable. Cleavage of the C9-N10' bond by the dioxygenase FrzG then leads to formation of a conjugated iminium. In addition to the oxidation of C9, an additional dehydrogenation between C7 and C8 can occur to give a likely shunt product. The next biosynthetic step is the intramolecular aldol condensation catalyzed by the newly identified aldolase FrzH to yield an aza-tricyclic product with the formation of a C9-C3' bond. The short-chain dehydrogenase/reductase FrzI then produces dephospho-(-)-FR901483 that is phosphorylated at C4'-OH into (-)-FR901483 by the phosphotransferase FrzJ. This chain is Non-canonical nonribosomal peptide synthetase FrzA, found in Cladobotryum sp.